The chain runs to 629 residues: uncharacterized protein (629 aa).

A compositionally biased stretch (polar residues) spans 1–11 (MSDDQQNGKQN). Disordered stretches follow at residues 1–24 (MSDD…EQDD), 62–87 (SNNN…SNYN), 197–464 (SEES…SSLI), and 493–560 (PTPT…STPD). Residues 247 to 264 (PSSSSSSSSLINSPTTSK) show a composition bias toward low complexity. Over residues 274–288 (PTINPKSLFGLSSTI) the composition is skewed to polar residues. Positions 294–430 (VKTEKEKEKE…DETLNKETPH (137 aa)) are enriched in basic and acidic residues. Composition is skewed to low complexity over residues 434-464 (PHIT…SSLI) and 493-554 (PTPT…NNNN).

This is an uncharacterized protein from Dictyostelium discoideum (Social amoeba).